A 410-amino-acid polypeptide reads, in one-letter code: Replication factor C large subunit (410 aa).

Position 46 to 53 (46 to 53 (GDPGTGKT)) interacts with ATP.

It belongs to the activator 1 small subunits family. RfcL subfamily. Heteromultimer composed of small subunits (RfcS) and large subunits (RfcL).

Part of the RFC clamp loader complex which loads the PCNA sliding clamp onto DNA. The sequence is that of Replication factor C large subunit from Picrophilus torridus (strain ATCC 700027 / DSM 9790 / JCM 10055 / NBRC 100828 / KAW 2/3).